The chain runs to 70 residues: NAD(P)H-quinone oxidoreductase subunit O (70 aa).

This sequence belongs to the complex I NdhO subunit family. NDH-1 can be composed of about 15 different subunits; different subcomplexes with different compositions have been identified which probably have different functions.

It is found in the cellular thylakoid membrane. The enzyme catalyses a plastoquinone + NADH + (n+1) H(+)(in) = a plastoquinol + NAD(+) + n H(+)(out). It carries out the reaction a plastoquinone + NADPH + (n+1) H(+)(in) = a plastoquinol + NADP(+) + n H(+)(out). Functionally, NDH-1 shuttles electrons from an unknown electron donor, via FMN and iron-sulfur (Fe-S) centers, to quinones in the respiratory and/or the photosynthetic chain. The immediate electron acceptor for the enzyme in this species is believed to be plastoquinone. Couples the redox reaction to proton translocation, and thus conserves the redox energy in a proton gradient. Cyanobacterial NDH-1 also plays a role in inorganic carbon-concentration. This Trichormus variabilis (strain ATCC 29413 / PCC 7937) (Anabaena variabilis) protein is NAD(P)H-quinone oxidoreductase subunit O.